The chain runs to 388 residues: Dual-specificity RNA methyltransferase RlmN (388 aa).

The active-site Proton acceptor is the Glu-109. One can recognise a Radical SAM core domain in the interval 115–354; the sequence is EDDRATLCVS…TIVRKTRGDD (240 aa). A disulfide bridge links Cys-122 with Cys-359. Cys-129, Cys-133, and Cys-136 together coordinate [4Fe-4S] cluster. S-adenosyl-L-methionine contacts are provided by residues 183–184, Ser-215, 237–239, and Asn-316; these read GE and SLH. The S-methylcysteine intermediate role is filled by Cys-359.

It belongs to the radical SAM superfamily. RlmN family. The cofactor is [4Fe-4S] cluster.

Its subcellular location is the cytoplasm. It carries out the reaction adenosine(2503) in 23S rRNA + 2 reduced [2Fe-2S]-[ferredoxin] + 2 S-adenosyl-L-methionine = 2-methyladenosine(2503) in 23S rRNA + 5'-deoxyadenosine + L-methionine + 2 oxidized [2Fe-2S]-[ferredoxin] + S-adenosyl-L-homocysteine. The enzyme catalyses adenosine(37) in tRNA + 2 reduced [2Fe-2S]-[ferredoxin] + 2 S-adenosyl-L-methionine = 2-methyladenosine(37) in tRNA + 5'-deoxyadenosine + L-methionine + 2 oxidized [2Fe-2S]-[ferredoxin] + S-adenosyl-L-homocysteine. Functionally, specifically methylates position 2 of adenine 2503 in 23S rRNA and position 2 of adenine 37 in tRNAs. m2A2503 modification seems to play a crucial role in the proofreading step occurring at the peptidyl transferase center and thus would serve to optimize ribosomal fidelity. This Salmonella arizonae (strain ATCC BAA-731 / CDC346-86 / RSK2980) protein is Dual-specificity RNA methyltransferase RlmN.